Reading from the N-terminus, the 270-residue chain is Non-homologous end joining protein Ku (270 aa).

In terms of domain architecture, Ku spans 10–194 (SLGLLNIGIK…NYPIQKQELT (185 aa)).

It belongs to the prokaryotic Ku family. In terms of assembly, homodimer. Interacts with LigD.

Its function is as follows. With LigD forms a non-homologous end joining (NHEJ) DNA repair enzyme, which repairs dsDNA breaks with reduced fidelity. Binds linear dsDNA with 5'- and 3'- overhangs but not closed circular dsDNA nor ssDNA. Recruits and stimulates the ligase activity of LigD. The sequence is that of Non-homologous end joining protein Ku from Bacillus thuringiensis subsp. konkukian (strain 97-27).